The chain runs to 430 residues: Adenylosuccinate synthetase (430 aa).

Residues 12 to 18 (GDEGKGK) and 40 to 42 (GHT) contribute to the GTP site. The active-site Proton acceptor is the Asp-13. Mg(2+) contacts are provided by Asp-13 and Gly-40. IMP-binding positions include 13–16 (DEGK), 38–41 (NAGH), Thr-128, Arg-142, Gln-223, Thr-238, and Arg-302. The active-site Proton donor is His-41. Substrate is bound at residue 298-304 (TTTGRPR). Residues Arg-304, 330 to 332 (LLD), and 412 to 414 (SVG) each bind GTP.

The protein belongs to the adenylosuccinate synthetase family. Homodimer. Mg(2+) is required as a cofactor.

The protein localises to the cytoplasm. The catalysed reaction is IMP + L-aspartate + GTP = N(6)-(1,2-dicarboxyethyl)-AMP + GDP + phosphate + 2 H(+). Its pathway is purine metabolism; AMP biosynthesis via de novo pathway; AMP from IMP: step 1/2. Plays an important role in the de novo pathway of purine nucleotide biosynthesis. Catalyzes the first committed step in the biosynthesis of AMP from IMP. The sequence is that of Adenylosuccinate synthetase from Listeria monocytogenes serovar 1/2a (strain ATCC BAA-679 / EGD-e).